The primary structure comprises 362 residues: Mitochondrial distribution and morphology protein 12 (362 aa).

Residues 1–361 (MSFDINWSQL…WPSWLCFDMS (361 aa)) enclose the SMP-LTD domain. Disordered stretches follow at residues 65-141 (DFYE…AATP) and 170-207 (TPSG…SKRG). Polar residues-rich tracts occupy residues 106–119 (VTLS…TQFA) and 170–187 (TPSG…MRTG). The segment covering 192–201 (PISNTPISSS) has biased composition (low complexity).

Belongs to the MDM12 family. Component of the ER-mitochondria encounter structure (ERMES) or MDM complex, composed of MMM1, MDM10, MDM12 and MDM34. An MMM1 homodimer associates with one molecule of MDM12 on each side in a pairwise head-to-tail manner, and the SMP-LTD domains of MMM1 and MDM12 generate a continuous hydrophobic tunnel for phospholipid trafficking.

The protein localises to the mitochondrion outer membrane. It localises to the endoplasmic reticulum membrane. Component of the ERMES/MDM complex, which serves as a molecular tether to connect the endoplasmic reticulum (ER) and mitochondria. Components of this complex are involved in the control of mitochondrial shape and protein biogenesis, and function in nonvesicular lipid trafficking between the ER and mitochondria. MDM12 is required for the interaction of the ER-resident membrane protein MMM1 and the outer mitochondrial membrane-resident beta-barrel protein MDM10. The MDM12-MMM1 subcomplex functions in the major beta-barrel assembly pathway that is responsible for biogenesis of all mitochondrial outer membrane beta-barrel proteins, and acts in a late step after the SAM complex. The MDM10-MDM12-MMM1 subcomplex further acts in the TOM40-specific pathway after the action of the MDM12-MMM1 complex. Essential for establishing and maintaining the structure of mitochondria and maintenance of mtDNA nucleoids. The protein is Mitochondrial distribution and morphology protein 12 of Meyerozyma guilliermondii (strain ATCC 6260 / CBS 566 / DSM 6381 / JCM 1539 / NBRC 10279 / NRRL Y-324) (Yeast).